An 87-amino-acid polypeptide reads, in one-letter code: Diazepam-binding inhibitor-like 5 (87 aa).

The 86-residue stretch at 2 to 87 (SQVEFEMACA…VEELKKNETC (86 aa)) folds into the ACB domain. An acyl-CoA-binding positions include 29–33 (YSFYK), lysine 55, and tyrosine 74.

Belongs to the ACBP family. Testis.

The protein localises to the cytoplasm. Its function is as follows. May be involved in the energy metabolism of the mature sperm. This Rattus norvegicus (Rat) protein is Diazepam-binding inhibitor-like 5 (Dbil5).